A 456-amino-acid polypeptide reads, in one-letter code: Probable mannan endo-1,4-beta-mannosidase F (456 aa).

The first 18 residues, 1 to 18 (MRPLSSAALLSAIGAVAA), serve as a signal peptide directing secretion. In terms of domain architecture, CBM1 spans 19-54 (QVGPWGQCGGQSYTGGTSCVSGWACVFLNDWYSQCQ). Residues 79-110 (STSVSATAPPSSTSSSTASVSSSTSSTPIPTS) form a disordered region. A ser-rich linker region spans residues 79–113 (STSVSATAPPSSTSSSTASVSSSTSSTPIPTSSGS). The tract at residues 114–456 (FVKAEGLKFN…CAVIDHVSRI (343 aa)) is catalytic. Substrate-binding residues include tryptophan 166 and asparagine 280. Glutamate 281 serves as the catalytic Proton donor. Residue tyrosine 356 participates in substrate binding. The active-site Nucleophile is glutamate 390. Tryptophan 420 contacts substrate.

This sequence belongs to the glycosyl hydrolase 5 (cellulase A) family.

Its subcellular location is the secreted. The catalysed reaction is Random hydrolysis of (1-&gt;4)-beta-D-mannosidic linkages in mannans, galactomannans and glucomannans.. Functionally, endo-1,4-mannanase, a crucial enzyme for depolymerization of seed galactomannans and wood galactoglucomannans. This is Probable mannan endo-1,4-beta-mannosidase F (manF) from Neosartorya fischeri (strain ATCC 1020 / DSM 3700 / CBS 544.65 / FGSC A1164 / JCM 1740 / NRRL 181 / WB 181) (Aspergillus fischerianus).